A 740-amino-acid polypeptide reads, in one-letter code: Dynein regulatory complex protein 1 (740 aa).

The stretch at 101–388 forms a coiled coil; the sequence is IDIREIHRRV…QFKELQKAMR (288 aa). The segment at 570-617 is disordered; that stretch reads ASMEKASMEETSTRSELELAEQTEMEGEKEESLVEGEKEEEEETPPSP. Positions 575-586 are enriched in basic and acidic residues; sequence ASMEETSTRSEL. The span at 587-598 shows a compositional bias: acidic residues; sequence ELAEQTEMEGEK. A coiled-coil region spans residues 691-724; the sequence is LTQRAKLLLENSSLEQQNTELQALLQQYLNSKIN.

It belongs to the DRC1 family. As to quaternary structure, component of the nexin-dynein regulatory complex (N-DRC). Interacts with CCDC65/DRC2, DRC3, GAS8/DRC4 and TCTE1/DRC5.

The protein resides in the cytoplasm. Its subcellular location is the cytoskeleton. It is found in the cilium axoneme. The protein localises to the flagellum axoneme. Functionally, component of the nexin-dynein regulatory complex (N-DRC) a key regulator of ciliary/flagellar motility which maintains the alignment and integrity of the distal axoneme and regulates microtubule sliding in motile axonemes. Plays a critical role in the assembly of N-DRC and also stabilizes the assembly of multiple inner dynein arms and radial spokes. Coassembles with CCDC65/DRC2 to form a central scaffold needed for assembly of the N-DRC and its attachment to the outer doublet microtubules. The chain is Dynein regulatory complex protein 1 (DRC1) from Homo sapiens (Human).